A 544-amino-acid polypeptide reads, in one-letter code: 4-coumarate--CoA ligase 1 (544 aa).

6 residues coordinate ATP: S190, S191, G192, T193, T194, and K198. Residue Y240 coordinates (E)-4-coumaroyl-AMP. K261 is a CoA binding site. Positions 263–332 are SBD1; the sequence is DIVPFLELIQ…AKFPNAKLGQ (70 aa). The (E)-4-coumaroyl-AMP site is built by A310, Q332, G333, T337, and M345. ATP-binding residues include Q332, G333, and T337. Residues 333–400 are SBD2; that stretch reads GYGMTEAGPV…IRGDQIMKGY (68 aa). ATP-binding residues include D421 and R436. K438 and K442 together coordinate (E)-4-coumaroyl-AMP. CoA contacts are provided by K444 and G445. K527 provides a ligand contact to ATP.

This sequence belongs to the ATP-dependent AMP-binding enzyme family. Mg(2+) is required as a cofactor.

The catalysed reaction is (E)-4-coumarate + ATP + CoA = (E)-4-coumaroyl-CoA + AMP + diphosphate. It catalyses the reaction (E)-4-coumarate + ATP + H(+) = (E)-4-coumaroyl-AMP + diphosphate. The enzyme catalyses (E)-4-coumaroyl-AMP + CoA = (E)-4-coumaroyl-CoA + AMP + H(+). Its pathway is phytoalexin biosynthesis; 3,4',5-trihydroxystilbene biosynthesis; 3,4',5-trihydroxystilbene from trans-4-coumarate: step 1/2. Functionally, carboxylate--CoA ligase that may use 4-coumarate as substrate. Follows a two-step reaction mechanism, wherein the carboxylate substrate first undergoes adenylation by ATP, followed by a thioesterification in the presence of CoA to yield the final CoA thioester. The polypeptide is 4-coumarate--CoA ligase 1 (4CL1) (Petroselinum crispum (Parsley)).